The primary structure comprises 248 residues: Glycoprotein BILF2 (248 aa).

Residues 1 to 17 form the signal peptide; it reads MTHLVLLLCCCVGSVCA. An Ig-like domain is found at 19–125; sequence FSDLVKFENV…NVTLRNCSVA (107 aa). Residues Asn-27, Asn-37, Asn-45, Asn-73, Asn-83, Asn-92, Asn-95, Asn-104, Asn-116, Asn-121, Asn-131, and Asn-144 are each glycosylated (N-linked (GlcNAc...) asparagine; by host). Cys-40 and Cys-115 are joined by a disulfide. A disordered region spans residues 167–191; that stretch reads VSHTTSTSHRPHRRPVSKRPTHKPV. Basic residues predominate over residues 175–188; sequence HRPHRRPVSKRPTH. A helical transmembrane segment spans residues 210–230; that stretch reads WALLLITCAVVAPVLLIIIIS.

Belongs to the Epstein-Barr virus BILF2 protein family.

It is found in the membrane. The sequence is that of Glycoprotein BILF2 from Epstein-Barr virus (strain B95-8) (HHV-4).